Consider the following 484-residue polypeptide: MLIFELSKTGRQAKAQIPRAVSKNYSIPEEFQRKSPPRLPACSELQVVRHFTCLSQKNFSIDTNFYPLGSCTMKYNPRGVHKAASLPGFINRHPLAMDNESQGFLETLYKLQNYISEITGMPGVSLTPMAGSQGEFAGVAMIKAYHQSRGDTARDEILIPDAAHGTNPASAVMCGFKVVEIATAPDGDIDLDELKRKVGPRTAGIMLTNPSTLGLFMRQIKEIANLVHQAGGLLYYDGANLNAILGKVRPGDMGFDVMHLNLHKTFATPHGGGGPGAGPVAVGKRLIPYMPLPVVKKTDSGYHWATRQDYPQSIGRLSCFMGNAGILLRAYFYMLVLGKEGLLRVSEFATLNANYLLKELTKVGYTAAYPGRRASHEFILTLNSEKKNYDVTAMDFAKRLLDYGVHAPTTYFPLLVPECLLIEPPETESKEELDAFVAVMKTIREEAIKQPDILKAAPHTLPVKRLDDVKAARELDLNYFATHE.

Lysine 264 carries the post-translational modification N6-(pyridoxal phosphate)lysine.

This sequence belongs to the GcvP family. C-terminal subunit subfamily. As to quaternary structure, the glycine cleavage system is composed of four proteins: P, T, L and H. In this organism, the P 'protein' is a heterodimer of two subunits. Requires pyridoxal 5'-phosphate as cofactor.

The catalysed reaction is N(6)-[(R)-lipoyl]-L-lysyl-[glycine-cleavage complex H protein] + glycine + H(+) = N(6)-[(R)-S(8)-aminomethyldihydrolipoyl]-L-lysyl-[glycine-cleavage complex H protein] + CO2. The glycine cleavage system catalyzes the degradation of glycine. The P protein binds the alpha-amino group of glycine through its pyridoxal phosphate cofactor; CO(2) is released and the remaining methylamine moiety is then transferred to the lipoamide cofactor of the H protein. The protein is Probable glycine dehydrogenase (decarboxylating) subunit 2 of Legionella pneumophila (strain Paris).